A 438-amino-acid polypeptide reads, in one-letter code: Ammonium transporter Rh type A (438 aa).

The Cytoplasmic portion of the chain corresponds to 1 to 4 (MRFK). The helical transmembrane segment at 5–25 (FPLMAISLEVAMIVLFGLFVE) threads the bilayer. Residues 26–61 (YETPQNASQKNASHQNASQQGNTSSSAKKDQFFQLY) are Extracellular-facing. N-linked (GlcNAc...) asparagine glycosylation is found at Asn31, Asn36, Asn41, and Asn47. A helical membrane pass occupies residues 62–82 (PLFQDVHVMIFVGFGFLMTFL). The Cytoplasmic segment spans residues 83-86 (KKYG). A helical membrane pass occupies residues 87 to 107 (FSGVGFNLFLAALGLQWGTIM). Topologically, residues 108 to 121 (QGLLHSHGKEFHFG) are extracellular. Residues 122–142 (IYNMINADFSTATVLISFGAV) form a helical membrane-spanning segment. Over 143 to 148 (LGKTSP) the chain is Cytoplasmic. The chain crosses the membrane as a helical span at residues 149-169 (IQMLIMTILEIAVFAGNEYLV). Topologically, residues 170 to 178 (TELFEASDT) are extracellular. The helical transmembrane segment at 179-199 (GASMTIHAFGAYFGLAVAGVL) threads the bilayer. The Cytoplasmic segment spans residues 200-218 (YRPGLRCEHPNDESVYHSD). The chain crosses the membrane as a helical span at residues 219–239 (LFAMIGTLFLWIFWPSFNSAI). Residues 240-249 (ADPGDHQYRA) lie on the Extracellular side of the membrane. A helical membrane pass occupies residues 250-270 (IVNTYMSLAACVITAYALSSL). Residues 271–278 (VERRGRLD) lie on the Cytoplasmic side of the membrane. Residues 279–296 (MVHIQNATLAGGVAVGTC) traverse the membrane as a helical segment. Residues 297–300 (ADME) lie on the Extracellular side of the membrane. The chain crosses the membrane as a helical span at residues 301-321 (IPLYAAMTIGSIAGIISVLGY). At 322-342 (KFFSPLLANKLMIHDTCGVHN) the chain is on the cytoplasmic side. The helical transmembrane segment at 343–363 (LHGLPGVFGGLASIVAISWGM) threads the bilayer. The Extracellular portion of the chain corresponds to 364–372 (STASMAMQA). A helical membrane pass occupies residues 373-393 (AALGSSIGSAIVGGLLTGLIL). Over 394-438 (KLPIWNQPPDEYCYDDSVSWKVPKFRELDNRFFQHANHNHVEHEV) the chain is Cytoplasmic.

The protein belongs to the ammonium transporter (TC 2.A.49) family. Rh subfamily. In terms of assembly, homodimer. Heterotrimer; a RHCE monomer interacts with a RHAG homodimer. Component of the ankyrin-1 complex in the erythrocyte, composed of ANK1, RHCE, RHAG, SLC4A1, EPB42, GYPA, GYPB and AQP1. Interacts with GYPB (via the N-terminal); this interaction bridges the (RHAG)2(RHCE) heterotrimer with the SLC4A1 Band 3 I dimer complexed with GYPA. Glycosylated.

The protein resides in the membrane. It catalyses the reaction methylamine(out) = methylamine(in). It carries out the reaction NH4(+)(in) = NH4(+)(out). The catalysed reaction is CO2(out) = CO2(in). In terms of biological role, component of the ankyrin-1 complex, a multiprotein complex involved in the stability and shape of the erythrocyte membrane. Heterotrimer with RHCE (RHAG)2(RHCE), that transports ammonium and its related derivative methylammonium, in both neutral and ionic forms, across the erythrocyte membrane. The transport of NH4(+) is electrogenic and masks the NH3 transport. Also, may act as a CO2 channel. Moreover in erythrocyte, regulates RHD membrane expression and is associated with rhesus blood group antigen expression. The polypeptide is Ammonium transporter Rh type A (Mus musculus (Mouse)).